Reading from the N-terminus, the 207-residue chain is Guanylate kinase (207 aa).

The Guanylate kinase-like domain occupies 6 to 185; the sequence is GLLIVLSGPS…AKQRIQSIVE (180 aa). ATP is bound at residue 13 to 20; the sequence is GPSGVGKG.

The protein belongs to the guanylate kinase family.

The protein resides in the cytoplasm. The enzyme catalyses GMP + ATP = GDP + ADP. In terms of biological role, essential for recycling GMP and indirectly, cGMP. This chain is Guanylate kinase, found in Staphylococcus saprophyticus subsp. saprophyticus (strain ATCC 15305 / DSM 20229 / NCIMB 8711 / NCTC 7292 / S-41).